A 282-amino-acid polypeptide reads, in one-letter code: Epoxide hydrolase LasB (282 aa).

The interval 1 to 133 is lsd19A; the sequence is MPAETVRKEV…TDSSWTARPA (133 aa). Tyr-14 is a substrate binding site. Asp-38 acts as the Proton acceptor; for 5-exo epoxide-opening cyclization activity in catalysis. Residues Glu-65 and His-146 each contribute to the substrate site. Positions 134 to 282 are lsd19B; that stretch reads PDEERRKELA…TDVSLLDPAA (149 aa). The Proton acceptor; for 6-endo epoxide-opening cyclization activity role is filled by Asp-170. Arg-177, Glu-197, and Tyr-251 together coordinate substrate.

Its function is as follows. Epoxide hydrolase responsible for the double epoxide-opening cyclization of bisepoxyprelasalocid A to form lasalocid A, a polyether antibiotic. In vitro, accepts various substrate analogs differing in the left segment of lasalocid and epoxide stereochemistry to afford products with excellent regioselectivity. This chain is Epoxide hydrolase LasB (lsd19), found in Streptomyces lasalocidi (Streptomyces lasaliensis).